Reading from the N-terminus, the 441-residue chain is N-succinylarginine dihydrolase (441 aa).

Residues 19 to 28 (AGLSFGNEAS), Asn110, and 137 to 138 (HR) contribute to the substrate site. Glu174 is a catalytic residue. Arg212 contributes to the substrate binding site. His248 is an active-site residue. Substrate is bound by residues Asp250 and Asn359. The active-site Nucleophile is Cys365.

This sequence belongs to the succinylarginine dihydrolase family. As to quaternary structure, homodimer.

It carries out the reaction N(2)-succinyl-L-arginine + 2 H2O + 2 H(+) = N(2)-succinyl-L-ornithine + 2 NH4(+) + CO2. It functions in the pathway amino-acid degradation; L-arginine degradation via AST pathway; L-glutamate and succinate from L-arginine: step 2/5. Its function is as follows. Catalyzes the hydrolysis of N(2)-succinylarginine into N(2)-succinylornithine, ammonia and CO(2). The sequence is that of N-succinylarginine dihydrolase from Cronobacter sakazakii (strain ATCC BAA-894) (Enterobacter sakazakii).